The sequence spans 314 residues: tRNA-cytidine(32) 2-sulfurtransferase (314 aa).

The short motif at 49–54 (SGGKDS) is the PP-loop motif element. 3 residues coordinate [4Fe-4S] cluster: Cys-124, Cys-127, and Cys-215.

The protein belongs to the TtcA family. Homodimer. The cofactor is Mg(2+). [4Fe-4S] cluster is required as a cofactor.

It localises to the cytoplasm. The catalysed reaction is cytidine(32) in tRNA + S-sulfanyl-L-cysteinyl-[cysteine desulfurase] + AH2 + ATP = 2-thiocytidine(32) in tRNA + L-cysteinyl-[cysteine desulfurase] + A + AMP + diphosphate + H(+). It participates in tRNA modification. Functionally, catalyzes the ATP-dependent 2-thiolation of cytidine in position 32 of tRNA, to form 2-thiocytidine (s(2)C32). The sulfur atoms are provided by the cysteine/cysteine desulfurase (IscS) system. The polypeptide is tRNA-cytidine(32) 2-sulfurtransferase (Histophilus somni (strain 2336) (Haemophilus somnus)).